The sequence spans 382 residues: Homoserine O-succinyltransferase (382 aa).

One can recognise an AB hydrolase-1 domain in the interval 51–359 (NAILVCHALS…EATQGHDAFL (309 aa)). Ser157 serves as the catalytic Nucleophile. A substrate-binding site is contributed by Arg227. Active-site residues include Asp322 and His355. Asp356 lines the substrate pocket.

This sequence belongs to the AB hydrolase superfamily. MetX family. Homodimer.

It localises to the cytoplasm. The catalysed reaction is L-homoserine + succinyl-CoA = O-succinyl-L-homoserine + CoA. Its pathway is amino-acid biosynthesis; L-methionine biosynthesis via de novo pathway; O-succinyl-L-homoserine from L-homoserine: step 1/1. Its function is as follows. Transfers a succinyl group from succinyl-CoA to L-homoserine, forming succinyl-L-homoserine. The sequence is that of Homoserine O-succinyltransferase from Halorhodospira halophila (strain DSM 244 / SL1) (Ectothiorhodospira halophila (strain DSM 244 / SL1)).